Reading from the N-terminus, the 501-residue chain is Glycerol kinase (501 aa).

Threonine 16 provides a ligand contact to ADP. Positions 16, 17, and 18 each coordinate ATP. Threonine 16 lines the sn-glycerol 3-phosphate pocket. Position 20 (arginine 20) interacts with ADP. Arginine 84, glutamate 85, tyrosine 135, and aspartate 242 together coordinate sn-glycerol 3-phosphate. The glycerol site is built by arginine 84, glutamate 85, tyrosine 135, aspartate 242, and glutamine 243. Positions 264 and 307 each coordinate ADP. 4 residues coordinate ATP: threonine 264, glycine 307, glutamine 311, and glycine 408. ADP is bound at residue glycine 408.

It belongs to the FGGY kinase family.

The catalysed reaction is glycerol + ATP = sn-glycerol 3-phosphate + ADP + H(+). Its pathway is polyol metabolism; glycerol degradation via glycerol kinase pathway; sn-glycerol 3-phosphate from glycerol: step 1/1. Functionally, key enzyme in the regulation of glycerol uptake and metabolism. Catalyzes the phosphorylation of glycerol to yield sn-glycerol 3-phosphate. In Saccharolobus islandicus (strain L.S.2.15 / Lassen #1) (Sulfolobus islandicus), this protein is Glycerol kinase.